The sequence spans 402 residues: Opaque-phase-specific protein OP4 (402 aa).

A signal peptide spans 1-20 (MKFSQATILAIFASSALVSA). N-linked (GlcNAc...) asparagine glycans are attached at residues Asn140 and Asn293. The tract at residues 302–322 (NNAGSSSKPTGTTTASTATAA) is disordered. Residues 304–322 (AGSSSKPTGTTTASTATAA) show a composition bias toward low complexity.

This Candida albicans (strain WO-1) (Yeast) protein is Opaque-phase-specific protein OP4 (OPS4).